The chain runs to 80 residues: Exodeoxyribonuclease 7 small subunit (80 aa).

The protein belongs to the XseB family. Heterooligomer composed of large and small subunits.

The protein resides in the cytoplasm. The enzyme catalyses Exonucleolytic cleavage in either 5'- to 3'- or 3'- to 5'-direction to yield nucleoside 5'-phosphates.. Its function is as follows. Bidirectionally degrades single-stranded DNA into large acid-insoluble oligonucleotides, which are then degraded further into small acid-soluble oligonucleotides. The polypeptide is Exodeoxyribonuclease 7 small subunit (Enterobacter sp. (strain 638)).